The following is a 116-amino-acid chain: Large ribosomal subunit protein bL20 (116 aa).

Belongs to the bacterial ribosomal protein bL20 family.

In terms of biological role, binds directly to 23S ribosomal RNA and is necessary for the in vitro assembly process of the 50S ribosomal subunit. It is not involved in the protein synthesizing functions of that subunit. This is Large ribosomal subunit protein bL20 from Hydrogenobaculum sp. (strain Y04AAS1).